The sequence spans 335 residues: BTB and MATH domain-containing protein 39 (335 aa).

Residues 14-141 (MKTLCFKIMN…NGVFTIEFDL (128 aa)) enclose the MATH domain. In terms of domain architecture, BTB spans 161–226 (ADGKLIVEDQ…LQLDEFKVNV (66 aa)).

The protein is BTB and MATH domain-containing protein 39 of Caenorhabditis briggsae.